A 262-amino-acid polypeptide reads, in one-letter code: Beta-phosphoglucomutase (262 aa).

The Nucleophile role is filled by D29. 2 residues coordinate Mg(2+): D29 and D31. D29 is subject to 4-aspartylphosphate. D31 acts as the Proton donor/acceptor in catalysis. 5 residues coordinate beta-D-glucose 6-phosphate: D31, G79, R82, S157, and N159. Residue D215 coordinates Mg(2+).

The protein belongs to the HAD-like hydrolase superfamily. CbbY/CbbZ/Gph/YieH family. As to quaternary structure, monomer. Mg(2+) is required as a cofactor. In terms of processing, autophosphorylated.

The enzyme catalyses beta-D-glucose 1-phosphate = beta-D-glucose 6-phosphate. Functionally, catalyzes the interconversion of D-glucose 1-phosphate (G1P) and D-glucose 6-phosphate (G6P), forming beta-D-glucose 1,6-(bis)phosphate (beta-G16P) as an intermediate. The protein is Beta-phosphoglucomutase of Mycobacterium bovis (strain ATCC BAA-935 / AF2122/97).